We begin with the raw amino-acid sequence, 162 residues long: tRNA-specific adenosine deaminase (162 aa).

One can recognise a CMP/dCMP-type deaminase domain in the interval 3–115; sequence DSDKYFMKCA…KNLQKYICCK (113 aa). Histidine 54 contributes to the Zn(2+) binding site. The Proton donor role is filled by glutamate 56. The Zn(2+) site is built by cysteine 84 and cysteine 87.

It belongs to the cytidine and deoxycytidylate deaminase family. As to quaternary structure, homodimer. Zn(2+) serves as cofactor.

The catalysed reaction is adenosine(34) in tRNA + H2O + H(+) = inosine(34) in tRNA + NH4(+). Functionally, catalyzes the deamination of adenosine to inosine at the wobble position 34 of tRNA(Arg2). The sequence is that of tRNA-specific adenosine deaminase from Buchnera aphidicola subsp. Baizongia pistaciae (strain Bp).